We begin with the raw amino-acid sequence, 451 residues long: Tubulin alpha-2 chain (451 aa).

Q11 is a GTP binding site. K40 bears the N6-acetyllysine mark. Residues E71, S140, G144, T145, T179, N206, and N228 each coordinate GTP. E71 is a Mg(2+) binding site. E254 is a catalytic residue. A disordered region spans residues 432-451 (YEEVGIDTADGEDDEEANDY).

Belongs to the tubulin family. As to quaternary structure, dimer of alpha and beta chains. A typical microtubule is a hollow water-filled tube with an outer diameter of 25 nm and an inner diameter of 15 nM. Alpha-beta heterodimers associate head-to-tail to form protofilaments running lengthwise along the microtubule wall with the beta-tubulin subunit facing the microtubule plus end conferring a structural polarity. Microtubules usually have 13 protofilaments but different protofilament numbers can be found in some organisms and specialized cells. The cofactor is Mg(2+). In terms of processing, undergoes a tyrosination/detyrosination cycle, the cyclic removal and re-addition of a C-terminal tyrosine residue by the enzymes tubulin tyrosine carboxypeptidase (TTCP) and tubulin tyrosine ligase (TTL), respectively. Post-translationally, acetylation of alpha chains at Lys-40 stabilizes microtubules and affects affinity and processivity of microtubule motors. This modification has a role in multiple cellular functions, ranging from cell motility, cell cycle progression or cell differentiation to intracellular trafficking and signaling.

The protein localises to the cytoplasm. Its subcellular location is the cytoskeleton. It catalyses the reaction GTP + H2O = GDP + phosphate + H(+). In terms of biological role, tubulin is the major constituent of microtubules, a cylinder consisting of laterally associated linear protofilaments composed of alpha- and beta-tubulin heterodimers. Microtubules grow by the addition of GTP-tubulin dimers to the microtubule end, where a stabilizing cap forms. Below the cap, tubulin dimers are in GDP-bound state, owing to GTPase activity of alpha-tubulin. The protein is Tubulin alpha-2 chain of Homarus americanus (American lobster).